The following is a 335-amino-acid chain: Protein-lysine N-methyltransferase EEF2KMT (335 aa).

An N-acetylmethionine modification is found at M1. S-adenosyl-L-methionine-binding positions include W139, G165–G167, W228, and A247.

The protein belongs to the class I-like SAM-binding methyltransferase superfamily. EEF2KMT family. As to quaternary structure, interacts with FAM86B2 and FAM86C1P.

It localises to the cytoplasm. The enzyme catalyses L-lysyl-[protein] + 3 S-adenosyl-L-methionine = N(6),N(6),N(6)-trimethyl-L-lysyl-[protein] + 3 S-adenosyl-L-homocysteine + 3 H(+). Functionally, catalyzes the trimethylation of eukaryotic elongation factor 2 (EEF2) on 'Lys-525'. This Mus musculus (Mouse) protein is Protein-lysine N-methyltransferase EEF2KMT (Eef2kmt).